A 228-amino-acid chain; its full sequence is Thermonuclease (228 aa).

Positions 1-23 are cleaved as a signal peptide; sequence MTEYLLSAGICMAIVSILLIGMA. The propeptide occupies 24 to 60; sequence ISNVSKEQYAKRFFFFATSCLVLTLVVASSLSSSANA. Asp-100 contributes to the Ca(2+) binding site. The active site involves Arg-114. The Ca(2+) site is built by Asp-119 and Thr-120. Residues Glu-122 and Arg-166 contribute to the active site.

This sequence belongs to the thermonuclease family. It depends on Ca(2+) as a cofactor.

The protein resides in the secreted. The enzyme catalyses Endonucleolytic cleavage to nucleoside 3'-phosphates and 3'-phosphooligonucleotide end-products.. Its function is as follows. Enzyme that catalyzes the hydrolysis of both DNA and RNA at the 5' position of the phosphodiester bond. This is Thermonuclease (nuc) from Staphylococcus aureus (strain MRSA252).